A 136-amino-acid polypeptide reads, in one-letter code: Histone H3.2 (136 aa).

The tract at residues 1–43 is disordered; that stretch reads MARTKQTARKSTGGKAPRKQLATKAARKSAPATGGVKKPHRFR. K5 is subject to N6-methylated lysine. Position 10 is an N6-acetyllysine; alternate (K10). N6-methylated lysine; alternate is present on K10. S11 is subject to Phosphoserine. Phosphothreonine is present on T12. K15 carries the post-translational modification N6-acetyllysine. N6-acetyllysine; alternate is present on residues K19 and K24. 2 positions are modified to N6-methylated lysine; alternate: K19 and K24. K28 carries the post-translational modification N6-methylated lysine. A Phosphoserine modification is found at S29. K37 is subject to N6-methylated lysine.

The protein belongs to the histone H3 family. As to quaternary structure, the nucleosome is a histone octamer containing two molecules each of H2A, H2B, H3 and H4 assembled in one H3-H4 heterotetramer and two H2A-H2B heterodimers. The octamer wraps approximately 147 bp of DNA. Acetylation is generally linked to gene activation. Can be acetylated to form H3K9ac, H3K14ac, H3K18ac and H3K23ac. H3K9ac could compete with H3K9me and prevent gene silencing. H3K9ac is restricted to euchromatin. In terms of processing, methylated to form mainly H3K4me, H3K9me, H3K18me, H3K23me, H3K27me and H3K36me. H3K4me1/2/3, H3K9me3, H3K27me3 and H3K36me1/2/3 are typical marks for euchromatin, whereas heterochromatic chromocenters are enriched in H3K9me1/2 and H3K27me1/2. H2BK143ub1 is probably prerequisite for H3K4me. Post-translationally, can be phosphorylated to form H3S10ph, H3T11ph and H3S28ph.

The protein localises to the nucleus. It is found in the chromosome. In terms of biological role, core component of nucleosome. Nucleosomes wrap and compact DNA into chromatin, limiting DNA accessibility to the cellular machineries which require DNA as a template. Histones thereby play a central role in transcription regulation, DNA repair, DNA replication and chromosomal stability. DNA accessibility is regulated via a complex set of post-translational modifications of histones, also called histone code, and nucleosome remodeling. This chain is Histone H3.2, found in Triticum aestivum (Wheat).